The chain runs to 559 residues: Hepatocyte nuclear factor 1-alpha (559 aa).

The region spanning Gly13 to Glu44 is the HNF-p1 domain. The dimerization stretch occupies residues Pro14–Gly43. A compositionally biased stretch (basic and acidic residues) spans Arg49–Gly62. Positions Arg49–Pro73 are disordered. The POU-specific atypical domain occupies Gln78–His173. 6 interaction with DNA regions span residues Gln121 to Glu123, His134 to Asn140, Lys146 to Lys149, Arg192 to Trp195, Arg252 to Tyr254, and Asn259 to Lys262. Residues Arg186–Lys194 carry the Nuclear localization signal motif. Residues Gly188–His268 constitute a DNA-binding region (homeobox; HNF1-type). Residues Thr492 to Gln559 form a disordered region. Over residues Asp499–Leu522 the composition is skewed to polar residues.

Belongs to the HNF1 homeobox family. In terms of assembly, binds DNA as a dimer. As to expression, expressed in liver, intestine, spleen and kidney.

It is found in the nucleus. Transcriptional activator that regulates the tissue specific expression of multiple genes, especially in pancreas and liver. Binds to the promoter of the albumin gene. The protein is Hepatocyte nuclear factor 1-alpha (hnf1a) of Salmo salar (Atlantic salmon).